The primary structure comprises 396 residues: Elongation factor Tu (396 aa).

The region spanning 10-205 is the tr-type G domain; it reads KPHVNIGTIG…ACDDNIPDPV (196 aa). A G1 region spans residues 19–26; that stretch reads GHVDHGKT. 19-26 serves as a coordination point for GTP; the sequence is GHVDHGKT. T26 serves as a coordination point for Mg(2+). A G2 region spans residues 62–66; that stretch reads GITIN. Residues 83–86 are G3; it reads DAPG. GTP is bound by residues 83–87 and 138–141; these read DAPGH and NKCD. Residues 138–141 are G4; that stretch reads NKCD. A G5 region spans residues 175–177; it reads SAL.

This sequence belongs to the TRAFAC class translation factor GTPase superfamily. Classic translation factor GTPase family. EF-Tu/EF-1A subfamily. In terms of assembly, monomer.

The protein localises to the cytoplasm. The enzyme catalyses GTP + H2O = GDP + phosphate + H(+). Functionally, GTP hydrolase that promotes the GTP-dependent binding of aminoacyl-tRNA to the A-site of ribosomes during protein biosynthesis. This chain is Elongation factor Tu, found in Corynebacterium glutamicum (strain ATCC 13032 / DSM 20300 / JCM 1318 / BCRC 11384 / CCUG 27702 / LMG 3730 / NBRC 12168 / NCIMB 10025 / NRRL B-2784 / 534).